Consider the following 104-residue polypeptide: L-rhamnose mutarotase (104 aa).

Y18 lines the substrate pocket. The active-site Proton donor is H22. Substrate-binding positions include Y41 and W76 to W77.

The protein belongs to the rhamnose mutarotase family. In terms of assembly, homodimer.

It is found in the cytoplasm. It carries out the reaction alpha-L-rhamnose = beta-L-rhamnose. It participates in carbohydrate metabolism; L-rhamnose metabolism. Functionally, involved in the anomeric conversion of L-rhamnose. The chain is L-rhamnose mutarotase from Escherichia coli O7:K1 (strain IAI39 / ExPEC).